A 74-amino-acid chain; its full sequence is MVSKSLIVLLLVSVLVSTFFTTEAYPASYDGDFDALDDLDDLDLDDLLDLEPADLVLLDMWANMLDSQDFEDFE.

Positions 1-24 are cleaved as a signal peptide; sequence MVSKSLIVLLLVSVLVSTFFTTEA.

This sequence belongs to the non-disulfide-bridged peptide (NDBP) superfamily. Long chain multifunctional peptide (group 2) family. In terms of tissue distribution, expressed by the venom gland.

Its subcellular location is the secreted. In terms of biological role, may be an antimicrobial peptide. This chain is Anionic peptide clone 10, found in Tityus costatus (Brazilian scorpion).